A 447-amino-acid chain; its full sequence is Phosphoglucosamine mutase (447 aa).

The Phosphoserine intermediate role is filled by S101. Mg(2+) is bound by residues S101, D242, D244, and D246. S101 carries the phosphoserine modification.

This sequence belongs to the phosphohexose mutase family. It depends on Mg(2+) as a cofactor. Activated by phosphorylation.

The enzyme catalyses alpha-D-glucosamine 1-phosphate = D-glucosamine 6-phosphate. Its function is as follows. Catalyzes the conversion of glucosamine-6-phosphate to glucosamine-1-phosphate. The sequence is that of Phosphoglucosamine mutase from Bradyrhizobium diazoefficiens (strain JCM 10833 / BCRC 13528 / IAM 13628 / NBRC 14792 / USDA 110).